We begin with the raw amino-acid sequence, 636 residues long: MIALRQAAYFICLFATVSCGCLTQLYHNIFFRGGDVSAMYTPDAQYCQLMCTFHPRCLLFSFLPENSTSDADKRFGCFLKDSVTGTLPRVSRTGAISGHSLKRCGHQISACHRSIYKGIDMRGVNFNASKVRSAKECQERCTNNIHCQFFTYATKTFFSAEYRNTCLLKRSPQGTPTRIKVLSDVESGFSLKACGNSKIGCRVDIFQHSAFSDVDVAGIIAPDAFVCRTICTYHPSCLFFTFYTNAWKTDSQRNVCFLKTSQSGSPSSPTPQENAISGYSLLTCKQTLPGTEPCHSKIYPQVAFEGEELHVTFVKGVDGCQETCTKMIRCQFFTYSLFPEDCRGEKCKCSLRLSLDGSPTNITYGTQASSGYSLRLCKRGDSRVCTTKRTRIVGGTNASWGEWPWQVSLQVKQRAQSHLCGGSIIGRQWVLTAAHCFDGLLLSNIWRIYGGILNLSEITTETSFSQIKEIIVHPNYKISEGSHDIALIKLEAPLNFTDLQKAICLPSKDDTKPVYTDCWITGWGFTEEKGKIQNTLQKANIPLISNEECQKSYRDYKITKQMICAGYKEGGKDACKGDSGGPLVCQHEETWHLVGITSWGEGCARREQPGVYTKVAEYVDWILEKTQDSHGQPLRK.

Residues 1–19 (MIALRQAAYFICLFATVSC) form the signal peptide. 4 Apple domains span residues 21-104 (CLTQ…LKRC), 111-194 (CHRS…LKAC), 201-284 (CRVD…LLTC), and 294-377 (CHSK…LRLC). 12 cysteine pairs are disulfide-bonded: Cys21/Cys104, Cys47/Cys77, Cys51/Cys57, Cys111/Cys194, Cys137/Cys166, Cys141/Cys147, Cys201/Cys284, Cys227/Cys256, Cys231/Cys237, Cys294/Cys377, Cys320/Cys349, and Cys324/Cys330. N-linked (GlcNAc...) asparagine glycosylation is found at Asn66 and Asn127. Residues Asn361 and Asn397 are each glycosylated (N-linked (GlcNAc...) asparagine). The Peptidase S1 domain maps to 392 to 627 (IVGGTNASWG…YVDWILEKTQ (236 aa)). A disulfide bridge connects residues Cys420 and Cys436. The Charge relay system role is filled by His435. A glycan (N-linked (GlcNAc...) asparagine) is linked at Asn454. Asp484 serves as the catalytic Charge relay system. Asn495 carries N-linked (GlcNAc...) asparagine glycosylation. Cystine bridges form between Cys518-Cys585, Cys549-Cys564, and Cys575-Cys603. Residue Ser579 is the Charge relay system of the active site.

It belongs to the peptidase S1 family. Plasma kallikrein subfamily. Forms a heterodimer with SERPINA5. The zymogen is activated by factor XIIa, which cleaves the molecule into a light chain, which contains the active site, and a heavy chain, which associates with HMW kininogen. These chains are linked by one or more disulfide bonds.

The protein resides in the secreted. It catalyses the reaction Cleaves selectively Arg-|-Xaa and Lys-|-Xaa bonds, including Lys-|-Arg and Arg-|-Ser bonds in (human) kininogen to release bradykinin.. Inhibited by SERPINA5. Functionally, the enzyme cleaves Lys-Arg and Arg-Ser bonds. It activates, in a reciprocal reaction, factor XII after its binding to a negatively charged surface. It also releases bradykinin from HMW kininogen and may also play a role in the renin-angiotensin system by converting prorenin into renin. In Bos taurus (Bovine), this protein is Plasma kallikrein (KLKB1).